The chain runs to 39 residues: Cytochrome b559 subunit beta (39 aa).

Residues 14-30 (WLAIHGLAVPTVFFLGS) traverse the membrane as a helical segment. Residue H18 participates in heme binding.

It belongs to the PsbE/PsbF family. Heterodimer of an alpha subunit and a beta subunit. PSII is composed of 1 copy each of membrane proteins PsbA, PsbB, PsbC, PsbD, PsbE, PsbF, PsbH, PsbI, PsbJ, PsbK, PsbL, PsbM, PsbT, PsbX, PsbY, PsbZ, Psb30/Ycf12, at least 3 peripheral proteins of the oxygen-evolving complex and a large number of cofactors. It forms dimeric complexes. Requires heme b as cofactor.

The protein localises to the plastid. The protein resides in the chloroplast thylakoid membrane. Functionally, this b-type cytochrome is tightly associated with the reaction center of photosystem II (PSII). PSII is a light-driven water:plastoquinone oxidoreductase that uses light energy to abstract electrons from H(2)O, generating O(2) and a proton gradient subsequently used for ATP formation. It consists of a core antenna complex that captures photons, and an electron transfer chain that converts photonic excitation into a charge separation. This Staurastrum punctulatum (Green alga) protein is Cytochrome b559 subunit beta.